A 190-amino-acid chain; its full sequence is Crossover junction endodeoxyribonuclease RuvC (190 aa).

Catalysis depends on residues D7, E67, and D140. D7, E67, and D140 together coordinate Mg(2+).

This sequence belongs to the RuvC family. In terms of assembly, homodimer which binds Holliday junction (HJ) DNA. The HJ becomes 2-fold symmetrical on binding to RuvC with unstacked arms; it has a different conformation from HJ DNA in complex with RuvA. In the full resolvosome a probable DNA-RuvA(4)-RuvB(12)-RuvC(2) complex forms which resolves the HJ. The cofactor is Mg(2+).

It localises to the cytoplasm. It catalyses the reaction Endonucleolytic cleavage at a junction such as a reciprocal single-stranded crossover between two homologous DNA duplexes (Holliday junction).. Functionally, the RuvA-RuvB-RuvC complex processes Holliday junction (HJ) DNA during genetic recombination and DNA repair. Endonuclease that resolves HJ intermediates. Cleaves cruciform DNA by making single-stranded nicks across the HJ at symmetrical positions within the homologous arms, yielding a 5'-phosphate and a 3'-hydroxyl group; requires a central core of homology in the junction. The consensus cleavage sequence is 5'-(A/T)TT(C/G)-3'. Cleavage occurs on the 3'-side of the TT dinucleotide at the point of strand exchange. HJ branch migration catalyzed by RuvA-RuvB allows RuvC to scan DNA until it finds its consensus sequence, where it cleaves and resolves the cruciform DNA. This Fusobacterium nucleatum subsp. nucleatum (strain ATCC 25586 / DSM 15643 / BCRC 10681 / CIP 101130 / JCM 8532 / KCTC 2640 / LMG 13131 / VPI 4355) protein is Crossover junction endodeoxyribonuclease RuvC.